Consider the following 619-residue polypeptide: Thiohydroximate-O-sulfate sulfur/sulfate-lyase (nitrile-forming) NSP4 (619 aa).

2 Jacalin-type lectin domains span residues 2–142 and 151–292; these read AQKV…YFAP and AKKL…YISL. 5 Kelch repeats span residues 326–374, 379–425, 429–478, 480–524, and 528–583; these read KIYS…VCMV, TLYV…SMAA, NVYV…VVQG, VWVV…ASAA, and HIVI…GWTA. Arg386 serves as the catalytic Proton donor. Residues Arg386, Ser419, Arg441, Gly470, and Val519 each coordinate a (Z)-N-(sulfonatooxy)alkanimidothioate. Catalysis depends on Arg441, which acts as the Proton donor. The Fe(2+) site is built by Glu535, Asp539, and His543. Residue Trp581 coordinates a (Z)-N-(sulfonatooxy)alkanimidothioate.

Belongs to the jacalin lectin family. Fe(2+) is required as a cofactor. As to expression, mainly expressed in roots, and, to a lower extent, in seedlings and leaves. Observed in seeds.

It catalyses the reaction a (Z)-N-(sulfonatooxy)alkanimidothioate = a nitrile + sulfur + sulfate. It carries out the reaction (Z)-phenyl-N-(sulfonatooxy)methanimidothioate = phenylacetonitrile + sulfur + sulfate. The catalysed reaction is (Z)-N-(sulfonatooxy)prop-2-enimidothioate = but-3-enenitrile + sulfur + sulfate. In terms of biological role, specifier protein that contributes to constitutive and herbivore-induced simple nitrile formation. Promotes simple nitriles, but not epithionitrile or thiocyanate formation. Converts allylglucosinolate and benzylglucosinolate (glucotropaeolin) to their corresponding simple nitriles in the presence of myrosinase. The sequence is that of Thiohydroximate-O-sulfate sulfur/sulfate-lyase (nitrile-forming) NSP4 from Arabidopsis thaliana (Mouse-ear cress).